Here is a 401-residue protein sequence, read N- to C-terminus: Beta-lactamase (401 aa).

An N-terminal signal peptide occupies residues 1–39 (MKLFTSTLTAKKSSTHKPLISLALSVLISTLLISETAQA). The active-site Acyl-ester intermediate is the Ser-102. Tyr-188 functions as the Proton acceptor in the catalytic mechanism. 353-355 (KTG) serves as a coordination point for substrate.

Belongs to the class-C beta-lactamase family.

Its subcellular location is the secreted. It catalyses the reaction a beta-lactam + H2O = a substituted beta-amino acid. In terms of biological role, this protein is a serine beta-lactamase with a substrate specificity for cephalosporins. The chain is Beta-lactamase (ampC) from Psychrobacter immobilis.